The primary structure comprises 430 residues: Glutamate-1-semialdehyde 2,1-aminomutase (430 aa).

Position 267 is an N6-(pyridoxal phosphate)lysine (Lys-267).

It belongs to the class-III pyridoxal-phosphate-dependent aminotransferase family. HemL subfamily. Homodimer. Pyridoxal 5'-phosphate serves as cofactor.

The protein localises to the cytoplasm. The enzyme catalyses (S)-4-amino-5-oxopentanoate = 5-aminolevulinate. Its pathway is porphyrin-containing compound metabolism; protoporphyrin-IX biosynthesis; 5-aminolevulinate from L-glutamyl-tRNA(Glu): step 2/2. In Natranaerobius thermophilus (strain ATCC BAA-1301 / DSM 18059 / JW/NM-WN-LF), this protein is Glutamate-1-semialdehyde 2,1-aminomutase.